The following is a 419-amino-acid chain: UDP-N-acetylglucosamine 1-carboxyvinyltransferase 2 (419 aa).

Phosphoenolpyruvate is bound at residue 24–25 (KN). R94 contacts UDP-N-acetyl-alpha-D-glucosamine. Catalysis depends on C118, which acts as the Proton donor. C118 is modified (2-(S-cysteinyl)pyruvic acid O-phosphothioketal). UDP-N-acetyl-alpha-D-glucosamine contacts are provided by residues 123–127 (RPIDQ), D307, and I329.

This sequence belongs to the EPSP synthase family. MurA subfamily.

It is found in the cytoplasm. It carries out the reaction phosphoenolpyruvate + UDP-N-acetyl-alpha-D-glucosamine = UDP-N-acetyl-3-O-(1-carboxyvinyl)-alpha-D-glucosamine + phosphate. It functions in the pathway cell wall biogenesis; peptidoglycan biosynthesis. In terms of biological role, cell wall formation. Adds enolpyruvyl to UDP-N-acetylglucosamine. The polypeptide is UDP-N-acetylglucosamine 1-carboxyvinyltransferase 2 (Staphylococcus aureus (strain MSSA476)).